A 243-amino-acid polypeptide reads, in one-letter code: UTP--glucose-1-phosphate uridylyltransferase AglF (243 aa).

The protein belongs to the UDPGP type 2 family.

It carries out the reaction alpha-D-glucose 1-phosphate + UTP + H(+) = UDP-alpha-D-glucose + diphosphate. It functions in the pathway cell surface structure biogenesis; S-layer biogenesis. Functionally, involved in the assembly of a N-linked pentasaccharide that decorates the S-layer glycoprotein and flagellins. Involved in the biosynthesis of the hexuronic acid found at position 3 of the pentasaccharide. The polypeptide is UTP--glucose-1-phosphate uridylyltransferase AglF (aglF) (Haloferax volcanii (strain ATCC 29605 / DSM 3757 / JCM 8879 / NBRC 14742 / NCIMB 2012 / VKM B-1768 / DS2) (Halobacterium volcanii)).